The chain runs to 310 residues: Homoserine kinase (310 aa).

95–105 (PQSRGLGSSAA) is an ATP binding site.

This sequence belongs to the GHMP kinase family. Homoserine kinase subfamily.

It is found in the cytoplasm. It carries out the reaction L-homoserine + ATP = O-phospho-L-homoserine + ADP + H(+). It functions in the pathway amino-acid biosynthesis; L-threonine biosynthesis; L-threonine from L-aspartate: step 4/5. Its function is as follows. Catalyzes the ATP-dependent phosphorylation of L-homoserine to L-homoserine phosphate. This is Homoserine kinase from Corynebacterium kroppenstedtii (strain DSM 44385 / JCM 11950 / CIP 105744 / CCUG 35717).